The chain runs to 152 residues: Deoxyuridine 5'-triphosphate nucleotidohydrolase (152 aa).

Substrate is bound by residues 71–73 (RSG), N84, 88–90 (LID), and M98.

It belongs to the dUTPase family. It depends on Mg(2+) as a cofactor.

It carries out the reaction dUTP + H2O = dUMP + diphosphate + H(+). It functions in the pathway pyrimidine metabolism; dUMP biosynthesis; dUMP from dCTP (dUTP route): step 2/2. In terms of biological role, this enzyme is involved in nucleotide metabolism: it produces dUMP, the immediate precursor of thymidine nucleotides and it decreases the intracellular concentration of dUTP so that uracil cannot be incorporated into DNA. In Shewanella putrefaciens (strain CN-32 / ATCC BAA-453), this protein is Deoxyuridine 5'-triphosphate nucleotidohydrolase.